The sequence spans 351 residues: tRNA pseudouridine synthase D (351 aa).

D96 serves as the catalytic Nucleophile. Residues 174-304 form the TRUD domain; sequence GAPNYFGPQR…MKPERRPLVA (131 aa). The segment at 244-268 is disordered; sequence VLPGEPEPSGAGPTGPLWGDGGTLA.

The protein belongs to the pseudouridine synthase TruD family.

The catalysed reaction is uridine(13) in tRNA = pseudouridine(13) in tRNA. In terms of biological role, responsible for synthesis of pseudouridine from uracil-13 in transfer RNAs. The sequence is that of tRNA pseudouridine synthase D from Marinobacter nauticus (strain ATCC 700491 / DSM 11845 / VT8) (Marinobacter aquaeolei).